The primary structure comprises 656 residues: MCLQNLLSILCFVLAISFGYVSAQKCVDSMFFRPNGTYDTNRHLILSNLASNVSSRDGYYNGSVGEGPDRIYALGLCIPGTDPKVCDDCMQIASTGILQNCPNQTDSYDWRSQKTLCFVRYSNSSFFNKMDLEPTMVIGDLNSGLFQGDLAAYTRTWEEFMNSMITRVGRTRYLADISPRIGSARIYALMQCIRGISSMECETCIRDNVRMYQSCCNGFIGGTIRKPVCFFRWDGSEYLGAFGDTPSLPPPSPDGKTISTGAIVAVVVSVVIFVVLLALVLVIRKRRQSYKTLKPKTDDDMTSPQSLQFDFMTLEAATDKFSRNNKLGKGGFGEVYKGMLPNETEVAVKRLSSNSGQGTQEFKNEVVIVAKLQHKNLVRLLGFCLERDEQILVYEFVPNKSLNYFLFGNKQKHLLDPTKKSQLDWKRRYNIIGGITRGLLYLHQDSRLTIIHRDIKASNILLDADMNPKIADFGMARNFRVDQTEDNTRRVVGTFGYMPPEYVTHGQFSTKSDVYSFGVLILEIVCGKKNSSFYKIDDSGGNLVTHVWRLWNNDSPLDLIDPAIEESCDNDKVIRCIHIGLLCVQETPVDRPEMSTIFQMLTNSSITLPVPRPPGFFFRNRSNLDPLTYGSELGQSSSKSIPYTIDSASITRVTPR.

The first 23 residues, 1 to 23 (MCLQNLLSILCFVLAISFGYVSA), serve as a signal peptide directing secretion. 2 consecutive Gnk2-homologous domains span residues 24 to 126 (QKCV…NSSF) and 134 to 238 (PTMV…GSEY). Over 24 to 262 (QKCVDSMFFR…PDGKTISTGA (239 aa)) the chain is Extracellular. Residues Asn35, Asn52, Asn61, Asn103, and Asn123 are each glycosylated (N-linked (GlcNAc...) asparagine). The chain crosses the membrane as a helical span at residues 263–283 (IVAVVVSVVIFVVLLALVLVI). Residues 284–656 (RKRRQSYKTL…SASITRVTPR (373 aa)) lie on the Cytoplasmic side of the membrane. In terms of domain architecture, Protein kinase spans 321–606 (FSRNNKLGKG…IFQMLTNSSI (286 aa)). ATP is bound by residues 327–335 (LGKGGFGEV) and Lys349. Position 394 is a phosphotyrosine (Tyr394). Asp454 (proton acceptor) is an active-site residue. Position 458 is a phosphoserine (Ser458). The residue at position 494 (Thr494) is a Phosphothreonine. Tyr502 carries the phosphotyrosine modification.

Belongs to the protein kinase superfamily. Ser/Thr protein kinase family. CRK subfamily.

The protein localises to the membrane. The enzyme catalyses L-seryl-[protein] + ATP = O-phospho-L-seryl-[protein] + ADP + H(+). It catalyses the reaction L-threonyl-[protein] + ATP = O-phospho-L-threonyl-[protein] + ADP + H(+). This Arabidopsis thaliana (Mouse-ear cress) protein is Putative cysteine-rich receptor-like protein kinase 32 (CRK32).